A 239-amino-acid polypeptide reads, in one-letter code: Probable 2-phosphosulfolactate phosphatase (239 aa).

It belongs to the ComB family. Mg(2+) is required as a cofactor.

The catalysed reaction is (2R)-O-phospho-3-sulfolactate + H2O = (2R)-3-sulfolactate + phosphate. This Clostridium botulinum (strain 657 / Type Ba4) protein is Probable 2-phosphosulfolactate phosphatase.